The sequence spans 172 residues: UPF0102 protein Pcryo_2198 (172 aa).

Belongs to the UPF0102 family.

This is UPF0102 protein Pcryo_2198 from Psychrobacter cryohalolentis (strain ATCC BAA-1226 / DSM 17306 / VKM B-2378 / K5).